A 218-amino-acid chain; its full sequence is Urease accessory protein UreG (218 aa).

GTP is bound at residue 22-29 (GPVGSGKT).

The protein belongs to the SIMIBI class G3E GTPase family. UreG subfamily. Homodimer. UreD, UreF and UreG form a complex that acts as a GTP-hydrolysis-dependent molecular chaperone, activating the urease apoprotein by helping to assemble the nickel containing metallocenter of UreC. The UreE protein probably delivers the nickel.

It is found in the cytoplasm. Functionally, facilitates the functional incorporation of the urease nickel metallocenter. This process requires GTP hydrolysis, probably effectuated by UreG. The protein is Urease accessory protein UreG of Polaromonas sp. (strain JS666 / ATCC BAA-500).